We begin with the raw amino-acid sequence, 83 residues long: Mu-theraphotoxin-Hhn2c (83 aa).

The first 21 residues, 1 to 21 (MKASMFLALAGLVLLFVVGYA), serve as a signal peptide directing secretion. Residues 22–48 (SESEEKEFPIELLSKIFAVDVFKGEER) constitute a propeptide that is removed on maturation. 3 cysteine pairs are disulfide-bonded: Cys50–Cys65, Cys57–Cys70, and Cys64–Cys77. Position 81 is a leucine amide (Leu81).

This sequence belongs to the neurotoxin 10 (Hwtx-1) family. 15 (Hntx-3) subfamily. Monomer. In terms of tissue distribution, expressed by the venom gland.

Its subcellular location is the secreted. Functionally, lethal neurotoxin. Selectively blocks tetrodotoxin-sensitive voltage-gated sodium channels (Nav). Does not affect tetrodotoxin-resistant voltage-gated sodium channels or calcium channels. In Cyriopagopus hainanus (Chinese bird spider), this protein is Mu-theraphotoxin-Hhn2c.